Reading from the N-terminus, the 216-residue chain is Uracil phosphoribosyltransferase (216 aa).

Residues R85, R110, and 135-143 (DPMVATGYS) contribute to the 5-phospho-alpha-D-ribose 1-diphosphate site. Uracil contacts are provided by residues I200 and 205 to 207 (GDA). Residue D206 coordinates 5-phospho-alpha-D-ribose 1-diphosphate.

It belongs to the UPRTase family. The cofactor is Mg(2+).

The enzyme catalyses UMP + diphosphate = 5-phospho-alpha-D-ribose 1-diphosphate + uracil. The protein operates within pyrimidine metabolism; UMP biosynthesis via salvage pathway; UMP from uracil: step 1/1. Allosterically activated by GTP. Functionally, catalyzes the conversion of uracil and 5-phospho-alpha-D-ribose 1-diphosphate (PRPP) to UMP and diphosphate. The polypeptide is Uracil phosphoribosyltransferase (Burkholderia multivorans (strain ATCC 17616 / 249)).